A 269-amino-acid chain; its full sequence is Lipid II flippase Amj (269 aa).

7 helical membrane-spanning segments follow: residues 1-21, 31-51, 84-104, 105-125, 161-181, 192-212, and 245-265; these read MHVI…IHSI, SGAR…MVIV, FLIF…PSFV, ALFS…FQVF, LFVI…SALY, TAVM…AIFV, and VAGT…IAWL.

It belongs to the Amj family.

The protein resides in the cell membrane. It participates in cell wall biogenesis; peptidoglycan biosynthesis. In terms of biological role, involved in peptidoglycan biosynthesis. Transports lipid-linked peptidoglycan precursors from the inner to the outer leaflet of the cytoplasmic membrane. May serve as a defense mechanism against naturally occurring MurJ antagonists. The protein is Lipid II flippase Amj of Bacillus subtilis (strain 168).